The following is a 122-amino-acid chain: Small ribosomal subunit protein uS13 (122 aa).

The disordered stretch occupies residues 95-122; sequence NLPVRGQRTHTNARTRKGKAKPIAGKKK.

Belongs to the universal ribosomal protein uS13 family. As to quaternary structure, part of the 30S ribosomal subunit. Forms a loose heterodimer with protein S19. Forms two bridges to the 50S subunit in the 70S ribosome.

Its function is as follows. Located at the top of the head of the 30S subunit, it contacts several helices of the 16S rRNA. In the 70S ribosome it contacts the 23S rRNA (bridge B1a) and protein L5 of the 50S subunit (bridge B1b), connecting the 2 subunits; these bridges are implicated in subunit movement. Contacts the tRNAs in the A and P-sites. In Methylobacterium nodulans (strain LMG 21967 / CNCM I-2342 / ORS 2060), this protein is Small ribosomal subunit protein uS13.